Reading from the N-terminus, the 215-residue chain is Octanoyltransferase (215 aa).

The BPL/LPL catalytic domain maps to 31-206 (TDAPDEVWLV…QLVKHLDYAE (176 aa)). Residues 70 to 77 (RGGQVTYH), 137 to 139 (SLG), and 150 to 152 (GLA) contribute to the substrate site. Cysteine 168 acts as the Acyl-thioester intermediate in catalysis.

The protein belongs to the LipB family.

Its subcellular location is the cytoplasm. The catalysed reaction is octanoyl-[ACP] + L-lysyl-[protein] = N(6)-octanoyl-L-lysyl-[protein] + holo-[ACP] + H(+). It participates in protein modification; protein lipoylation via endogenous pathway; protein N(6)-(lipoyl)lysine from octanoyl-[acyl-carrier-protein]: step 1/2. Functionally, catalyzes the transfer of endogenously produced octanoic acid from octanoyl-acyl-carrier-protein onto the lipoyl domains of lipoate-dependent enzymes. Lipoyl-ACP can also act as a substrate although octanoyl-ACP is likely to be the physiological substrate. The sequence is that of Octanoyltransferase from Pseudomonas fluorescens (strain ATCC BAA-477 / NRRL B-23932 / Pf-5).